The sequence spans 906 residues: Serine-aspartate repeat-containing protein C (906 aa).

The N-terminal stretch at 1–50 (MNNKKTATNRKGMIPNRLNKFSIRKYSVGTASILVGTTLIFGLSGHEAKA) is a signal peptide. Residues 51-127 (AEHTNGELNQ…QPTKKNNDAT (77 aa)) are disordered. Residues 51–486 (AEHTNGELNQ…GSSTANGDQK (436 aa)) form a ligand binding A region region. Polar residues-rich tracts occupy residues 56–71 (GELNQSKNEATAPSEN) and 80–119 (RQQNNVEQSTTSNQPKVNESDNTSVKETTEEPQNTTSTQP). CNA-B domains lie at 487-597 (KYNL…YKTP) and 598-708 (KYSL…EEET). The segment at 669–881 (KQTGTNTTED…TGSENNGSNN (213 aa)) is disordered. Acidic residues-rich tracts occupy residues 676–686 (TEDDKDADGGE) and 703–845 (YFEE…DSDS). Positions 869-873 (LPETG) match the LPXTG sorting signal motif. Thr-872 is modified (pentaglycyl murein peptidoglycan amidated threonine). A propeptide spans 873-906 (GSENNGSNNATLFGGLFAALGSLLLFGRRKKQNK) (removed by sortase).

This sequence belongs to the serine-aspartate repeat-containing protein (SDr) family. As to quaternary structure, homodimerizes; via N2-Domain. Interacts with host NRXN1; this interaction mediates bacterial attachment to host cells.

The protein resides in the secreted. It is found in the cell wall. Functionally, cell surface-associated calcium-binding protein which plays an important role in adhesion and pathogenesis. Mediates interactions with components of the extracellular matrix such as host NRXN1 to promote bacterial adhesion. The polypeptide is Serine-aspartate repeat-containing protein C (sdrC) (Staphylococcus aureus (strain MRSA252)).